The primary structure comprises 147 residues: CLAVATA3/ESR (CLE)-related protein 4C (147 aa).

Positions 1-21 are cleaved as a signal peptide; it reads MATNTMLCLFVISVVLALAFA. Positions 21-83 are required for secretion from the host cytoplasm to the host apoplasm; it reads ATNKKGDEEP…SNQLPNNNWM (63 aa). Residue N32 is glycosylated (N-linked (GlcNAc...) asparagine). Disordered regions lie at residues 57–86 and 116–147; these read GADA…MAPP and RKTG…PIHH. Positions 125-137 are enriched in basic and acidic residues; that stretch reads HHEETTLEQEKRV. Residues 136-147 carry the CLE motif; that stretch reads RVAGAGPDPIHH.

The protein belongs to the CLV3/ESR signal peptide family. In terms of tissue distribution, highly expressed exclusively within the dorsal esophageal gland cell during syncytium formation in host plants.

The protein localises to the secreted. The protein resides in the host cytoplasm. Its subcellular location is the host extracellular space. It localises to the extracellular space. It is found in the apoplast. Mimics host plant CLE extracellular signal peptides that regulate cell fate. May play a role in the differentiation or division of feeding cells (syncytia) induced in plant roots during infection. This chain is CLAVATA3/ESR (CLE)-related protein 4C (CLE-4C), found in Globodera rostochiensis (Golden nematode worm).